The following is a 193-amino-acid chain: Rho-related GTP-binding protein RhoA-B (193 aa).

Residues 12-19 (GDGACGKT), 30-37 (FPEVYVPT), 59-63 (DTAGQ), 117-120 (NKKD), and 160-162 (SAK) contribute to the GTP site. Tyr-34 carries a (Microbial infection) O-linked (GlcNAc) tyrosine; by Yersinia Afp18 glycan. Cys-190 bears the Cysteine methyl ester mark. Residue Cys-190 is the site of S-geranylgeranyl cysteine attachment. A propeptide spans 191 to 193 (CLL) (removed in mature form).

Belongs to the small GTPase superfamily. Rho family. (Microbial infection) Glycosylated at Tyr-34 by Yersinia ruckeri toxin Afp18. Mono-O-GlcNAcylation by Afp18 inhibits RhoA activation by guanine nucleotide exchange factors and blocks RhoA signaling.

The protein resides in the cell membrane. In terms of biological role, regulates a signal transduction pathway linking plasma membrane receptors to the assembly of focal adhesions and actin stress fibers. This Danio rerio (Zebrafish) protein is Rho-related GTP-binding protein RhoA-B.